Here is a 64-residue protein sequence, read N- to C-terminus: UPF0370 protein YPA_2246 (64 aa).

A helical membrane pass occupies residues 3-23 (WLADYWWIILILLVGMILNGI). Positions 36–47 (DNKPELPPHRDN) are enriched in basic and acidic residues. The segment at 36-64 (DNKPELPPHRDNNAQWDDEDDWPDQNKKK) is disordered.

This sequence belongs to the UPF0370 family.

The protein resides in the cell membrane. This chain is UPF0370 protein YPA_2246, found in Yersinia pestis bv. Antiqua (strain Antiqua).